The chain runs to 114 residues: Large ribosomal subunit protein bL20 (114 aa).

Belongs to the bacterial ribosomal protein bL20 family.

Its function is as follows. Binds directly to 23S ribosomal RNA and is necessary for the in vitro assembly process of the 50S ribosomal subunit. It is not involved in the protein synthesizing functions of that subunit. The chain is Large ribosomal subunit protein bL20 from Amoebophilus asiaticus (strain 5a2).